We begin with the raw amino-acid sequence, 242 residues long: 1-(5-phosphoribosyl)-5-[(5-phosphoribosylamino)methylideneamino] imidazole-4-carboxamide isomerase (242 aa).

Asp8 acts as the Proton acceptor in catalysis. Catalysis depends on Asp129, which acts as the Proton donor.

The protein belongs to the HisA/HisF family.

It localises to the cytoplasm. It catalyses the reaction 1-(5-phospho-beta-D-ribosyl)-5-[(5-phospho-beta-D-ribosylamino)methylideneamino]imidazole-4-carboxamide = 5-[(5-phospho-1-deoxy-D-ribulos-1-ylimino)methylamino]-1-(5-phospho-beta-D-ribosyl)imidazole-4-carboxamide. The protein operates within amino-acid biosynthesis; L-histidine biosynthesis; L-histidine from 5-phospho-alpha-D-ribose 1-diphosphate: step 4/9. The protein is 1-(5-phosphoribosyl)-5-[(5-phosphoribosylamino)methylideneamino] imidazole-4-carboxamide isomerase of Beijerinckia indica subsp. indica (strain ATCC 9039 / DSM 1715 / NCIMB 8712).